A 238-amino-acid chain; its full sequence is uncharacterized protein (238 aa).

The signal sequence occupies residues 1–20; that stretch reads MNNVKLLIAGSAFFAMSAQA.

The protein to E.coli GltF.

This is an uncharacterized protein from Escherichia coli (strain K12).